The primary structure comprises 189 residues: Coatomer subunit zeta (189 aa).

It belongs to the adaptor complexes small subunit family. As to quaternary structure, oligomeric complex that consists of at least the alpha, beta, beta', gamma, delta, epsilon and zeta subunits.

The protein localises to the cytoplasm. The protein resides in the golgi apparatus membrane. It localises to the cytoplasmic vesicle. It is found in the COPI-coated vesicle membrane. In terms of biological role, the coatomer is a cytosolic protein complex that binds to dilysine motifs and reversibly associates with Golgi non-clathrin-coated vesicles, which further mediate biosynthetic protein transport from the ER, via the Golgi up to the trans Golgi network. Coatomer complex is required for budding from Golgi membranes, and is essential for the retrograde Golgi-to-ER transport of dilysine-tagged proteins. The zeta subunit may be involved in regulating the coat assembly and, hence, the rate of biosynthetic protein transport due to its association-dissociation properties with the coatomer complex. The protein is Coatomer subunit zeta (RET3) of Saccharomyces cerevisiae (strain ATCC 204508 / S288c) (Baker's yeast).